The primary structure comprises 517 residues: Bifunctional purine biosynthesis protein PurH (517 aa).

The region spanning 1 to 145 (MSPLALVSVS…KNHKDVSVLV (145 aa)) is the MGS-like domain.

Belongs to the PurH family.

The catalysed reaction is (6R)-10-formyltetrahydrofolate + 5-amino-1-(5-phospho-beta-D-ribosyl)imidazole-4-carboxamide = 5-formamido-1-(5-phospho-D-ribosyl)imidazole-4-carboxamide + (6S)-5,6,7,8-tetrahydrofolate. It carries out the reaction IMP + H2O = 5-formamido-1-(5-phospho-D-ribosyl)imidazole-4-carboxamide. It participates in purine metabolism; IMP biosynthesis via de novo pathway; 5-formamido-1-(5-phospho-D-ribosyl)imidazole-4-carboxamide from 5-amino-1-(5-phospho-D-ribosyl)imidazole-4-carboxamide (10-formyl THF route): step 1/1. It functions in the pathway purine metabolism; IMP biosynthesis via de novo pathway; IMP from 5-formamido-1-(5-phospho-D-ribosyl)imidazole-4-carboxamide: step 1/1. The sequence is that of Bifunctional purine biosynthesis protein PurH from Prochlorococcus marinus subsp. pastoris (strain CCMP1986 / NIES-2087 / MED4).